The primary structure comprises 957 residues: Protein CRT10 (957 aa).

Residues 695–719 (NSTEEDDVNSDPENEESGSSLTSFQ) are disordered. The segment covering 697–710 (TEEDDVNSDPENEE) has biased composition (acidic residues). Serine 704 bears the Phosphoserine mark.

In terms of assembly, component of a cullin-RING ligase (CRL) composed of 4 subunits: the RING protein HRT1, the cullin RTT101, a linker protein MMS1, and the substrate receptor CRT10. Interacts with MMS1.

In terms of biological role, substrate targeting component of a cullin-RING-based E3 ubiquitin-protein ligase complex RTT101(MMS1-CRT10). RTT101(MMS1-CRT10) may regulate nucleotide synthesis through transcriptional regulation of RNR genes encoding ribonucleotide reductases. This Saccharomyces cerevisiae (strain ATCC 204508 / S288c) (Baker's yeast) protein is Protein CRT10 (CRT10).